The sequence spans 74 residues: Large ribosomal subunit protein bL31 (74 aa).

Residues Cys16, Cys18, Cys38, and Cys41 each contribute to the Zn(2+) site.

Belongs to the bacterial ribosomal protein bL31 family. Type A subfamily. As to quaternary structure, part of the 50S ribosomal subunit. The cofactor is Zn(2+).

Binds the 23S rRNA. The polypeptide is Large ribosomal subunit protein bL31 (Mycobacteroides abscessus (strain ATCC 19977 / DSM 44196 / CCUG 20993 / CIP 104536 / JCM 13569 / NCTC 13031 / TMC 1543 / L948) (Mycobacterium abscessus)).